A 111-amino-acid chain; its full sequence is Disintegrin subunit alpha (111 aa).

The N-terminal stretch at 1 to 20 is a signal peptide; it reads MIQVLLVTICLAVFPYQGSS. The propeptide occupies 21–44; sequence IILESGNVNDYEVVYPRKITPLPK. The 67-residue stretch at 45–111 folds into the Disintegrin domain; it reads GAVQPKNPCC…GDCPRKHFYA (67 aa). 4 cysteine pairs are disulfide-bonded: Cys53–Cys76, Cys67–Cys73, Cys72–Cys97, and Cys85–Cys104. The Cell attachment site motif lies at 89-91; sequence RGD. Positions 110 to 111 are excised as a propeptide; sequence YA.

The protein belongs to the disintegrin family. Dimeric disintegrin subfamily. Heterodimer with subunit beta; disulfide-linked. Expressed by the venom gland.

It is found in the secreted. Acts by binding to alpha-IIb/beta-3 (ITGA2B/ITGB3) on the platelet surface and inhibits both ADP-induced platelet aggregation and platelet aggregate dissociation in human platelet-rich plasma. This is Disintegrin subunit alpha from Agkistrodon piscivorus leucostoma (Western cottonmouth).